Reading from the N-terminus, the 212-residue chain is Thymidylate kinase (212 aa).

An ATP-binding site is contributed by 10–17; it reads GIDGCGKT.

Belongs to the thymidylate kinase family.

The catalysed reaction is dTMP + ATP = dTDP + ADP. Phosphorylation of dTMP to form dTDP in both de novo and salvage pathways of dTTP synthesis. This is Thymidylate kinase from Synechococcus sp. (strain RCC307).